A 906-amino-acid polypeptide reads, in one-letter code: Eukaryotic translation initiation factor 4 gamma 2 (906 aa).

Met-1 is modified (N-acetylmethionine). A disordered region spans residues 1–71; the sequence is MESAIAEGGA…SAANNSANEK (71 aa). Ser-11 carries the post-translational modification Phosphoserine. The MIF4G domain occupies 78–308; the sequence is FRKVRGILNK…QDTVELREHH (231 aa). Phosphothreonine is present on Thr-89. Omega-N-methylarginine is present on Arg-359. Phosphoserine is present on Ser-394. Residue Lys-430 is modified to N6-methyllysine. The residue at position 442 (Ser-442) is a Phosphoserine. Residues 497 to 540 are disordered; the sequence is PPSAQPPRTQTPPLGQTPQLGLKTNPPLIQEKPAKTSKKPPPSK. Residues 502–515 are compositionally biased toward polar residues; it reads PPRTQTPPLGQTPQ. Arg-504 is modified (omega-N-methylarginine). Thr-507 and Thr-513 each carry phosphothreonine. Residues 542-665 form the MI domain; sequence ELLKLTEAVV…SISELAQPLE (124 aa). Residue Lys-574 forms a Glycyl lysine isopeptide (Lys-Gly) (interchain with G-Cter in SUMO2) linkage. In terms of domain architecture, W2 spans 719-903; sequence EGKGLSFLFP…ETAEEEESEE (185 aa). Ser-901 carries the phosphoserine modification.

Belongs to the eukaryotic initiation factor 4G family. As to quaternary structure, interacts with the serine/threonine protein kinases MKNK1 and MKNK2. Binds EIF4A and EIF3. Interacts with MIF4GD. Interacts with DAZAP2. In terms of processing, phosphorylation; hyperphosphorylated during mitosis. Ubiquitously expressed in all tissues examined.

Appears to play a role in the switch from cap-dependent to IRES-mediated translation during mitosis, apoptosis and viral infection. Cleaved by some caspases and viral proteases. This is Eukaryotic translation initiation factor 4 gamma 2 from Mus musculus (Mouse).